A 304-amino-acid chain; its full sequence is Lipoyl synthase (304 aa).

The [4Fe-4S] cluster site is built by Cys41, Cys46, Cys52, Cys68, Cys72, Cys75, and Ser281. A Radical SAM core domain is found at 54–270 (GARRTATFMI…RKIAMEKGFK (217 aa)). Residues 282–304 (YHADEQVNEAAKEKQRQGEEQLN) form a disordered region.

This sequence belongs to the radical SAM superfamily. Lipoyl synthase family. [4Fe-4S] cluster is required as a cofactor.

It is found in the cytoplasm. The catalysed reaction is [[Fe-S] cluster scaffold protein carrying a second [4Fe-4S](2+) cluster] + N(6)-octanoyl-L-lysyl-[protein] + 2 oxidized [2Fe-2S]-[ferredoxin] + 2 S-adenosyl-L-methionine + 4 H(+) = [[Fe-S] cluster scaffold protein] + N(6)-[(R)-dihydrolipoyl]-L-lysyl-[protein] + 4 Fe(3+) + 2 hydrogen sulfide + 2 5'-deoxyadenosine + 2 L-methionine + 2 reduced [2Fe-2S]-[ferredoxin]. Its pathway is protein modification; protein lipoylation via endogenous pathway; protein N(6)-(lipoyl)lysine from octanoyl-[acyl-carrier-protein]. Catalyzes the radical-mediated insertion of two sulfur atoms into the C-6 and C-8 positions of the octanoyl moiety bound to the lipoyl domains of lipoate-dependent enzymes, thereby converting the octanoylated domains into lipoylated derivatives. The chain is Lipoyl synthase from Staphylococcus epidermidis (strain ATCC 35984 / DSM 28319 / BCRC 17069 / CCUG 31568 / BM 3577 / RP62A).